We begin with the raw amino-acid sequence, 878 residues long: AP-5 complex subunit beta-1 (878 aa).

A disordered region spans residues 234 to 260; that stretch reads RLQPQAPSWPAAEEGEGERSLTAREHS. The span at 250-260 shows a compositional bias: basic and acidic residues; sequence GERSLTAREHS.

In terms of assembly, probably part of the adaptor protein complex 5 (AP-5), a tetramer composed of AP5B1, AP5M1, AP5S1 and AP5Z1. Interacts with ZFYVE26 and SPG11.

In terms of biological role, as part of AP-5, a probable fifth adaptor protein complex it may be involved in endosomal transport. This chain is AP-5 complex subunit beta-1 (AP5B1), found in Homo sapiens (Human).